The chain runs to 737 residues: Catalase-peroxidase (737 aa).

The first 23 residues, 1-23 (MLKKILPVLITLAIVHNTPTAWA), serve as a signal peptide directing secretion. Residues 102-223 (WHGAGTYRIY…LAATQMGLIY (122 aa)) constitute a cross-link (tryptophyl-tyrosyl-methioninium (Trp-Tyr) (with M-249)). Catalysis depends on H103, which acts as the Proton acceptor. The segment at residues 223-249 (YVNPEGPNGKPDPVAAAKDIREAFARM) is a cross-link (tryptophyl-tyrosyl-methioninium (Tyr-Met) (with W-102)). H264 serves as a coordination point for heme b.

It belongs to the peroxidase family. Peroxidase/catalase subfamily. As to quaternary structure, homodimer or homotetramer. Heme b serves as cofactor. Formation of the three residue Trp-Tyr-Met cross-link is important for the catalase, but not the peroxidase activity of the enzyme.

The enzyme catalyses H2O2 + AH2 = A + 2 H2O. It catalyses the reaction 2 H2O2 = O2 + 2 H2O. Its function is as follows. Bifunctional enzyme with both catalase and broad-spectrum peroxidase activity. The protein is Catalase-peroxidase of Yersinia pseudotuberculosis serotype O:3 (strain YPIII).